The primary structure comprises 332 residues: L-lactate dehydrogenase A chain (332 aa).

A2 is subject to N-acetylalanine. Residue K5 is modified to N6-acetyllysine; alternate. The residue at position 5 (K5) is an N6-succinyllysine; alternate. K14 bears the N6-acetyllysine mark. Residue T18 is modified to Phosphothreonine. Position 29-57 (29-57 (GAVGMACAISILMKDLADELALVDVIEDK)) interacts with NAD(+). The residue at position 57 (K57) is an N6-acetyllysine; alternate. K57 participates in a covalent cross-link: Glycyl lysine isopeptide (Lys-Gly) (interchain with G-Cter in SUMO2); alternate. Position 81 is an N6-acetyllysine (K81). Residue R99 participates in NAD(+) binding. Position 106 (R106) interacts with substrate. K118 is subject to N6-acetyllysine; alternate. N6-succinyllysine; alternate is present on K118. K126 bears the N6-acetyllysine mark. Substrate-binding residues include N138 and R169. The active-site Proton acceptor is H193. K224 and K232 each carry N6-acetyllysine. At Y239 the chain carries Phosphotyrosine. K243 is subject to N6-acetyllysine. T248 serves as a coordination point for substrate. T309 carries the phosphothreonine modification. Phosphoserine is present on S310. Position 318 is an N6-acetyllysine; alternate (K318). K318 is modified (N6-succinyllysine; alternate). T322 bears the Phosphothreonine mark.

This sequence belongs to the LDH/MDH superfamily. LDH family. Homotetramer. Interacts with PTEN upstream reading frame protein MP31. ISGylated.

It localises to the cytoplasm. The enzyme catalyses (S)-lactate + NAD(+) = pyruvate + NADH + H(+). It functions in the pathway fermentation; pyruvate fermentation to lactate; (S)-lactate from pyruvate: step 1/1. Its function is as follows. Interconverts simultaneously and stereospecifically pyruvate and lactate with concomitant interconversion of NADH and NAD(+). The polypeptide is L-lactate dehydrogenase A chain (LDHA) (Pan troglodytes (Chimpanzee)).